The following is an 881-amino-acid chain: Probable alpha/beta-glucosidase agdC (881 aa).

The N-terminal stretch at 1 to 14 is a signal peptide; sequence MLRSLLLLAPLVGA. Asn171, Asn293, and Asn373 each carry an N-linked (GlcNAc...) asparagine glycan. Asp422 (nucleophile) is an active-site residue. Glu425 is an active-site residue. Residues 440 to 485 are disordered; sequence YSRDNDLPPAAPPVRPSNPRPLPGFPGDFQPSSSSKRSTKGSKVGL. Pro residues predominate over residues 448–463; that stretch reads PAAPPVRPSNPRPLPG. The N-linked (GlcNAc...) asparagine glycan is linked to Asn506. Residue Asp571 is the Proton donor of the active site. Residues Asn572, Asn608, and Asn742 are each glycosylated (N-linked (GlcNAc...) asparagine).

It belongs to the glycosyl hydrolase 31 family.

It is found in the secreted. It catalyses the reaction Hydrolysis of terminal, non-reducing (1-&gt;4)-linked alpha-D-glucose residues with release of alpha-D-glucose.. The enzyme catalyses Hydrolysis of terminal, non-reducing beta-D-glucosyl residues with release of beta-D-glucose.. Functionally, glucosidase involved in the degradation of cellulosic biomass. Has both alpha- and beta-glucosidase activity. The sequence is that of Probable alpha/beta-glucosidase agdC (agdC) from Neosartorya fischeri (strain ATCC 1020 / DSM 3700 / CBS 544.65 / FGSC A1164 / JCM 1740 / NRRL 181 / WB 181) (Aspergillus fischerianus).